The chain runs to 233 residues: Sugar fermentation stimulation protein homolog (233 aa).

Belongs to the SfsA family.

The protein is Sugar fermentation stimulation protein homolog of Pyrobaculum neutrophilum (strain DSM 2338 / JCM 9278 / NBRC 100436 / V24Sta) (Thermoproteus neutrophilus).